Reading from the N-terminus, the 157-residue chain is ATP synthase subunit b', chloroplastic (157 aa).

The chain crosses the membrane as a helical span at residues 26-43 (LMASQFLLIMLILDITFY).

This sequence belongs to the ATPase B chain family. As to quaternary structure, F-type ATPases have 2 components, F(1) - the catalytic core - and F(0) - the membrane proton channel. F(1) has five subunits: alpha(3), beta(3), gamma(1), delta(1), epsilon(1). F(0) has four main subunits: a(1), b(1), b'(1) and c(10-14). The alpha and beta chains form an alternating ring which encloses part of the gamma chain. F(1) is attached to F(0) by a central stalk formed by the gamma and epsilon chains, while a peripheral stalk is formed by the delta, b and b' chains.

It is found in the plastid. It localises to the chloroplast thylakoid membrane. F(1)F(0) ATP synthase produces ATP from ADP in the presence of a proton or sodium gradient. F-type ATPases consist of two structural domains, F(1) containing the extramembraneous catalytic core and F(0) containing the membrane proton channel, linked together by a central stalk and a peripheral stalk. During catalysis, ATP synthesis in the catalytic domain of F(1) is coupled via a rotary mechanism of the central stalk subunits to proton translocation. Its function is as follows. Component of the F(0) channel, it forms part of the peripheral stalk, linking F(1) to F(0). The b'-subunit is a diverged and duplicated form of b found in plants and photosynthetic bacteria. The chain is ATP synthase subunit b', chloroplastic from Cyanidium caldarium (Red alga).